The chain runs to 177 residues: Embryogenesis-like protein (177 aa).

Residues 98–118 (VDEINLKFAEAREEIEMAMDA) adopt a coiled-coil conformation.

In terms of assembly, interacts with HAG1/GCN5. As to expression, expressed in flowers, leaves, stems and siliques.

It is found in the nucleus. Its function is as follows. Activates gene expression by recruiting HAG1/GCN5 and triggering subsequent histone H3 acetylation of target genes promoters. In Arabidopsis thaliana (Mouse-ear cress), this protein is Embryogenesis-like protein.